The sequence spans 938 residues: Isoleucine--tRNA ligase (938 aa).

The 'HIGH' region signature appears at 58-68 (PYANGSIHIGH). Glu561 is a binding site for L-isoleucyl-5'-AMP. A 'KMSKS' region motif is present at residues 602–606 (KMSKS). Lys605 provides a ligand contact to ATP. Residues Cys901, Cys904, Cys921, and Cys924 each coordinate Zn(2+).

Belongs to the class-I aminoacyl-tRNA synthetase family. IleS type 1 subfamily. As to quaternary structure, monomer. The cofactor is Zn(2+).

It is found in the cytoplasm. The catalysed reaction is tRNA(Ile) + L-isoleucine + ATP = L-isoleucyl-tRNA(Ile) + AMP + diphosphate. Its function is as follows. Catalyzes the attachment of isoleucine to tRNA(Ile). As IleRS can inadvertently accommodate and process structurally similar amino acids such as valine, to avoid such errors it has two additional distinct tRNA(Ile)-dependent editing activities. One activity is designated as 'pretransfer' editing and involves the hydrolysis of activated Val-AMP. The other activity is designated 'posttransfer' editing and involves deacylation of mischarged Val-tRNA(Ile). In Baumannia cicadellinicola subsp. Homalodisca coagulata, this protein is Isoleucine--tRNA ligase.